A 184-amino-acid polypeptide reads, in one-letter code: Thylakoid membrane protein slr0575 (184 aa).

Helical transmembrane passes span 5-25 and 31-51; these read ISLA…GFVA and ATLN…GLAL.

The protein localises to the cellular thylakoid membrane. This Synechocystis sp. (strain ATCC 27184 / PCC 6803 / Kazusa) protein is Thylakoid membrane protein slr0575.